The sequence spans 225 residues: Peptidyl-tRNA hydrolase (225 aa).

Tyrosine 27 provides a ligand contact to tRNA. Histidine 32 serves as the catalytic Proton acceptor. Positions 78, 80, and 126 each coordinate tRNA. The segment at 198–225 (FNPLDFSGPDRQDQPAPLNPAKTAPGES) is disordered.

Belongs to the PTH family. Monomer.

It localises to the cytoplasm. The catalysed reaction is an N-acyl-L-alpha-aminoacyl-tRNA + H2O = an N-acyl-L-amino acid + a tRNA + H(+). Its function is as follows. Hydrolyzes ribosome-free peptidyl-tRNAs (with 1 or more amino acids incorporated), which drop off the ribosome during protein synthesis, or as a result of ribosome stalling. Functionally, catalyzes the release of premature peptidyl moieties from peptidyl-tRNA molecules trapped in stalled 50S ribosomal subunits, and thus maintains levels of free tRNAs and 50S ribosomes. The protein is Peptidyl-tRNA hydrolase of Synechococcus sp. (strain JA-3-3Ab) (Cyanobacteria bacterium Yellowstone A-Prime).